The sequence spans 504 residues: Maturase K (504 aa).

The protein belongs to the intron maturase 2 family. MatK subfamily.

It localises to the plastid. The protein resides in the chloroplast. Its function is as follows. Usually encoded in the trnK tRNA gene intron. Probably assists in splicing its own and other chloroplast group II introns. This chain is Maturase K, found in Pseudoturritis turrita (Tower rock-cress).